Here is a 525-residue protein sequence, read N- to C-terminus: Chromosomal replication initiator protein DnaA (525 aa).

Residues Met1–Thr71 form a domain I, interacts with DnaA modulators region. A domain II region spans residues Thr71–Ser188. Positions Ala160–Asp182 are disordered. Positions Pro169–Ala181 are enriched in low complexity. The interval Lys189 to Ser405 is domain III, AAA+ region. ATP-binding residues include Gly233, Gly235, Lys236, and Thr237. The tract at residues Lys406–Gly525 is domain IV, binds dsDNA.

It belongs to the DnaA family. As to quaternary structure, oligomerizes as a right-handed, spiral filament on DNA at oriC.

The protein localises to the cytoplasm. In terms of biological role, plays an essential role in the initiation and regulation of chromosomal replication. ATP-DnaA binds to the origin of replication (oriC) to initiate formation of the DNA replication initiation complex once per cell cycle. Binds the DnaA box (a 9 base pair repeat at the origin) and separates the double-stranded (ds)DNA. Forms a right-handed helical filament on oriC DNA; dsDNA binds to the exterior of the filament while single-stranded (ss)DNA is stabiized in the filament's interior. The ATP-DnaA-oriC complex binds and stabilizes one strand of the AT-rich DNA unwinding element (DUE), permitting loading of DNA polymerase. After initiation quickly degrades to an ADP-DnaA complex that is not apt for DNA replication. Binds acidic phospholipids. This is Chromosomal replication initiator protein DnaA from Burkholderia orbicola (strain MC0-3).